The chain runs to 150 residues: Cytochrome c oxidase subunit 5A, mitochondrial (150 aa).

The N-terminal 41 residues, Met-1–Tyr-41, are a transit peptide targeting the mitochondrion. The short motif at Leu-2–Ala-17 is the SIFI-degron element. Lys-87 and Lys-113 each carry N6-acetyllysine. Thr-141 carries the post-translational modification Phosphothreonine.

It belongs to the cytochrome c oxidase subunit 5A family. Component of the cytochrome c oxidase (complex IV, CIV), a multisubunit enzyme composed of 14 subunits. The complex is composed of a catalytic core of 3 subunits MT-CO1, MT-CO2 and MT-CO3, encoded in the mitochondrial DNA, and 11 supernumerary subunits COX4I, COX5A, COX5B, COX6A, COX6B, COX6C, COX7A, COX7B, COX7C, COX8 and NDUFA4, which are encoded in the nuclear genome. The complex exists as a monomer or a dimer and forms supercomplexes (SCs) in the inner mitochondrial membrane with NADH-ubiquinone oxidoreductase (complex I, CI) and ubiquinol-cytochrome c oxidoreductase (cytochrome b-c1 complex, complex III, CIII), resulting in different assemblies (supercomplex SCI(1)III(2)IV(1) and megacomplex MCI(2)III(2)IV(2)). Interacts with AFG1L. Interacts with RAB5IF. Post-translationally, in response to mitochondrial stress, the precursor protein is ubiquitinated by the SIFI complex in the cytoplasm before mitochondrial import, leading to its degradation. Within the SIFI complex, UBR4 initiates ubiquitin chain that are further elongated or branched by KCMF1.

The protein resides in the mitochondrion inner membrane. It functions in the pathway energy metabolism; oxidative phosphorylation. Its function is as follows. Component of the cytochrome c oxidase, the last enzyme in the mitochondrial electron transport chain which drives oxidative phosphorylation. The respiratory chain contains 3 multisubunit complexes succinate dehydrogenase (complex II, CII), ubiquinol-cytochrome c oxidoreductase (cytochrome b-c1 complex, complex III, CIII) and cytochrome c oxidase (complex IV, CIV), that cooperate to transfer electrons derived from NADH and succinate to molecular oxygen, creating an electrochemical gradient over the inner membrane that drives transmembrane transport and the ATP synthase. Cytochrome c oxidase is the component of the respiratory chain that catalyzes the reduction of oxygen to water. Electrons originating from reduced cytochrome c in the intermembrane space (IMS) are transferred via the dinuclear copper A center (CU(A)) of subunit 2 and heme A of subunit 1 to the active site in subunit 1, a binuclear center (BNC) formed by heme A3 and copper B (CU(B)). The BNC reduces molecular oxygen to 2 water molecules using 4 electrons from cytochrome c in the IMS and 4 protons from the mitochondrial matrix. The sequence is that of Cytochrome c oxidase subunit 5A, mitochondrial (COX5A) from Plecturocebus donacophilus (Bolivian gray titi monkey).